We begin with the raw amino-acid sequence, 300 residues long: Ribonuclease HIII (300 aa).

One can recognise an RNase H type-2 domain in the interval 86–300 (RPRLGVDESG…FYEICDSTDI (215 aa)). Positions 92, 93, and 196 each coordinate a divalent metal cation.

Belongs to the RNase HII family. RnhC subfamily. The cofactor is Mn(2+). Mg(2+) serves as cofactor.

It is found in the cytoplasm. The enzyme catalyses Endonucleolytic cleavage to 5'-phosphomonoester.. In terms of biological role, endonuclease that specifically degrades the RNA of RNA-DNA hybrids. The chain is Ribonuclease HIII from Chlamydia abortus (strain DSM 27085 / S26/3) (Chlamydophila abortus).